The following is a 236-amino-acid chain: MPRKHLIASGINKKQQQQAKIWMKCAKEIKAAAKMGGPNPEANPRLKVAIERALNNNLSRDSIERNINGASKDADNLKELTYEGYGPNGLAIIVRALTDNEQRTISAVRGYFSKLQGQIAKPNSVSMLFNEYGQLLIDKKTKTLDEWFELLVDQDIVDINEDDEIIEILVQPKDFSATKLILENNNANIQSAEIKLIPTDFISLDDHARERLVRFVNACENDDDISWVITNYEEEL.

It belongs to the TACO1 family.

The protein localises to the cytoplasm. The chain is Probable transcriptional regulatory protein UUR10_0292 from Ureaplasma urealyticum serovar 10 (strain ATCC 33699 / Western).